We begin with the raw amino-acid sequence, 82 residues long: Putative membrane protein insertion efficiency factor (82 aa).

Belongs to the UPF0161 family.

It is found in the cell inner membrane. Its function is as follows. Could be involved in insertion of integral membrane proteins into the membrane. The sequence is that of Putative membrane protein insertion efficiency factor from Synechococcus elongatus (strain ATCC 33912 / PCC 7942 / FACHB-805) (Anacystis nidulans R2).